We begin with the raw amino-acid sequence, 406 residues long: Tubby-like F-box protein 3 (406 aa).

The F-box domain maps to 50–105; that stretch reads SCWASMPPELLRDVLMRIEQSEDTWPSRKNVVSCAGVCRNWREIVKEIVRVPELSS.

Belongs to the TUB family. As to expression, ubiquitous at low levels. Not detected in mature siliques.

Its subcellular location is the cell membrane. The protein localises to the plastid. The protein resides in the nucleus. It is found in the nucleoplasm. It localises to the cytoplasm. Functionally, involved in abiotic stress signaling. Tethered to plasma membrane (PM) and probably bound to phosphatidylinositol 4,5-bisphosphate. Abiotic stresses (drought, salt, H(2)O(2)) trigger phospholipase C mediated PM dislogement and plastidial and nucleocytosolic relocation of TULP3. The protein is Tubby-like F-box protein 3 of Arabidopsis thaliana (Mouse-ear cress).